The chain runs to 381 residues: Genome polyprotein (381 aa).

A disordered region spans residues 115-155 (ANDTIDTGGNSKKDVKPEQGSIQPSSNKGKEKDVNAGTSGT).

It belongs to the potyviridae genome polyprotein family. Genome polyprotein of potyviruses undergoes post-translational proteolytic processing by the main proteinase NIa-pro resulting in the production of at least ten individual proteins. The P1 proteinase and the HC-pro cleave only their respective C-termini autocatalytically. 6K1 is essential for proper proteolytic separation of P3 from CI.

It is found in the virion. It catalyses the reaction RNA(n) + a ribonucleoside 5'-triphosphate = RNA(n+1) + diphosphate. Its function is as follows. An RNA-dependent RNA polymerase that plays an essential role in the virus replication. Involved in aphid transmission, cell-to-cell and systemis movement, encapsidation of the viral RNA and in the regulation of viral RNA amplification. This Capsicum annuum (Capsicum pepper) protein is Genome polyprotein.